Here is a 149-residue protein sequence, read N- to C-terminus: uncharacterized protein (149 aa).

Residues Leu2–Arg146 enclose the N-acetyltransferase domain.

Belongs to the acetyltransferase family.

This is an uncharacterized protein from Bacillus subtilis (strain 168).